A 382-amino-acid polypeptide reads, in one-letter code: Ustilagic acid biosynthesis cluster protein orf2 (382 aa).

Residues 1-20 (MLQEAKVSTHTSNPLSQSVP) are compositionally biased toward polar residues. Residues 1–22 (MLQEAKVSTHTSNPLSQSVPQY) are disordered.

The protein operates within secondary metabolite biosynthesis. Its function is as follows. Part of the gene cluster that mediates the biosynthesis of the glycolipid biosurfactant ustilagic acid (UA). UA is a secreted cellobiose glycolipid that is toxic for many microorganisms and confers biocontrol activity to U.maydis. UA consists of 15,16-dihydroxypalmitic or 2,15,16-trihydroxypalmitic acid, which is O-glycosidically linked to cellobiose at its terminal hydroxyl group. In addition, the cellobiose moiety is acetylated and acylated with a short-chain hydroxy fatty acid. UA biosynthesis starts with omega-hydroxylation of palmitic acid catalyzed by the cytochrome P450 monooxygenase cyp1. Terminal hydroxylation of palmitic acid precedes subterminal hydroxylation catalyzed by the cytochrome P450 monooxygenase cyp2. Sequential glucosylation of the hydroxy fatty acid is probably catalyzed by the glycosyltransferase ugt1. The cellobiose lipid is further decorated by acetylation of the proximal glucose residue and by acylation with a short-chain beta-hydroxy fatty acid at the distal glucose residue. The acyltransferase uat1 may be a good candidate for catalyzing either acetylation or acylation of the cellobiose lipid. The fatty acid synthase fas2 may be involved in synthesis of the carbon backbone of the short-chain beta-hydroxy fatty acid esterified to the cellobiose disaccharide. The secreted UA consists of a mixture of both alpha-hydroxylated and non-hydroxylated glycolipids; therefore, alpha-hydroxylation of the long-chain fatty, catalyzed by the fatty acid hydroxylase ahd1, occurs late in UA biosynthesis and may be the last step before secretion. The sequence is that of Ustilagic acid biosynthesis cluster protein orf2 from Mycosarcoma maydis (Corn smut fungus).